A 144-amino-acid chain; its full sequence is Large ribosomal subunit protein uL11 (144 aa).

Belongs to the universal ribosomal protein uL11 family. As to quaternary structure, part of the ribosomal stalk of the 50S ribosomal subunit. Interacts with L10 and the large rRNA to form the base of the stalk. L10 forms an elongated spine to which L12 dimers bind in a sequential fashion forming a multimeric L10(L12)X complex. In terms of processing, one or more lysine residues are methylated.

In terms of biological role, forms part of the ribosomal stalk which helps the ribosome interact with GTP-bound translation factors. This is Large ribosomal subunit protein uL11 from Polaromonas naphthalenivorans (strain CJ2).